The primary structure comprises 134 residues: uncharacterized protein (134 aa).

The helical transmembrane segment at 4-24 (NLLILLSLLLVVVAIMWWLYE) threads the bilayer.

The protein resides in the membrane. This is an uncharacterized protein from Invertebrate iridescent virus 6 (IIV-6).